Consider the following 184-residue polypeptide: uncharacterized protein (184 aa).

The segment at 146–177 (HPKTSLAQQPNAKATQPPLSKETLNTAKETDP) is disordered. Residues 150-172 (SLAQQPNAKATQPPLSKETLNTA) are compositionally biased toward polar residues.

This is an uncharacterized protein from Picosynechococcus sp. (strain ATCC 27264 / PCC 7002 / PR-6) (Agmenellum quadruplicatum).